Here is a 154-residue protein sequence, read N- to C-terminus: UPF0225 protein YPTB2098 (154 aa).

This sequence belongs to the UPF0225 family.

This is UPF0225 protein YPTB2098 from Yersinia pseudotuberculosis serotype I (strain IP32953).